Reading from the N-terminus, the 452-residue chain is Down-regulator of invasive growth 1 (452 aa).

2 disordered regions span residues 1 to 145 (MAVS…SAPA) and 262 to 311 (RNKR…ADLR). 2 stretches are compositionally biased toward polar residues: residues 12 to 22 (EDTSIAKSTQD) and 35 to 53 (KGSS…SVGQ). Position 45 is a phosphoserine (serine 45). Over residues 61-77 (PEEDDSGDKEADHEDSE) the composition is skewed to acidic residues. A compositionally biased stretch (basic residues) spans 81 to 100 (AKKRKAQPLKNPKKSLKRGR). Composition is skewed to polar residues over residues 107-116 (LSDSNTNTHG), 124-145 (LASS…SAPA), 269-281 (SYDS…ASTG), and 291-307 (RNSS…TQQR). Residues serine 126, serine 142, serine 272, and serine 275 each carry the phosphoserine modification. The segment at 212 to 452 (IPPPHMLNKP…KSSSHHRTGK (241 aa)) is interaction with FUS3 and KSS1. The residue at position 330 (serine 330) is a Phosphoserine. Residues 331–348 (ANTKARSASTSTSTSTST) are compositionally biased toward low complexity. The segment at 331-395 (ANTKARSAST…QRTSQPQQQS (65 aa)) is disordered. The segment covering 349-361 (NRDRSSWHEAEPN) has biased composition (basic and acidic residues). Acidic residues predominate over residues 362–372 (KDEEEGTDLAI). A compositionally biased stretch (low complexity) spans 378–395 (PTPTFTTFQRTSQPQQQS). The residue at position 379 (threonine 379) is a Phosphothreonine. A phosphoserine mark is found at serine 395 and serine 428.

Forms a complex with DIG2, STE12 and either FUS3 or KSS1. The interaction of FUS3 with STE12 depends on the presence of both DIG1 and DIG2. STE12 is lost from FUS3/DIG1/DIG2 complex after pheromone treatment. DIG1 and DIG2 have also been reported to interact with CLN1 and CLN2. Phosphorylated by FUS3 and KSS1, in a pheromone-stimulated manner. Phosphorylation reduces the affinity for STE12.

The protein localises to the nucleus. Functionally, DIG1 and DIG2 are negative regulators of the filamentation and pheromone induced mating program. DIG1 and DIG2 inhibit the transcriptional activity of STE12 by direct protein-protein interaction. DIG1 colocalizes to promoters with STE12 and redistributes with it during induction of filamentation (by butanol) or mating (by pheromone) to program specific genes, but binding of DIG1 to STE12 is reduced by pheromone treatment. The sequence is that of Down-regulator of invasive growth 1 (DIG1) from Saccharomyces cerevisiae (strain ATCC 204508 / S288c) (Baker's yeast).